We begin with the raw amino-acid sequence, 301 residues long: Coiled-coil domain-containing protein 69-B (301 aa).

A disordered region spans residues 1–43 (MGSKTSKMCCPQLRKKKRQKAHKEGPSSQELNDLNAKSQGPNE). G2 carries the N-myristoyl glycine lipid modification. A compositionally biased stretch (polar residues) spans 26–41 (PSSQELNDLNAKSQGP). Coiled-coil stretches lie at residues 42 to 167 (NELL…SILS) and 213 to 281 (KSTM…NLYR).

It belongs to the CCDC69 family.

The protein localises to the cytoplasm. It localises to the cytoskeleton. It is found in the spindle. The protein resides in the midbody. In terms of biological role, may act as a scaffold to regulate the recruitment and assembly of spindle midzone components. This chain is Coiled-coil domain-containing protein 69-B (ccdc69-b), found in Xenopus laevis (African clawed frog).